A 183-amino-acid chain; its full sequence is ATP-dependent protease subunit HslV (183 aa).

Thr-13 is an active-site residue. 3 residues coordinate Na(+): Gly-168, Cys-171, and Thr-174.

It belongs to the peptidase T1B family. HslV subfamily. As to quaternary structure, a double ring-shaped homohexamer of HslV is capped on each side by a ring-shaped HslU homohexamer. The assembly of the HslU/HslV complex is dependent on binding of ATP.

The protein resides in the cytoplasm. It carries out the reaction ATP-dependent cleavage of peptide bonds with broad specificity.. Its activity is regulated as follows. Allosterically activated by HslU binding. Protease subunit of a proteasome-like degradation complex believed to be a general protein degrading machinery. This Xanthomonas euvesicatoria pv. vesicatoria (strain 85-10) (Xanthomonas campestris pv. vesicatoria) protein is ATP-dependent protease subunit HslV.